The following is a 619-amino-acid chain: TOX high mobility group box family member 4 (619 aa).

Disordered regions lie at residues 153 to 227 and 304 to 337; these read LGLS…QKPV and DMDP…PPAL. Phosphothreonine is present on T176. Phosphoserine is present on residues S178, S181, and S182. Positions 183-193 are enriched in basic and acidic residues; it reads LHEDGVEEFRR. The span at 208–218 shows a compositional bias: basic residues; sequence KQKAPKKRKKK. A Nuclear localization signal motif is present at residues 213–218; the sequence is KKRKKK. Positions 223–291 form a DNA-binding region, HMG box; it reads PQKPVSAYAL…EYLKALAAYK (69 aa). The segment covering 307-319 has biased composition (pro residues); it reads PAPPSQTPSPPPV. T313 is modified (phosphothreonine). Phosphoserine is present on S315. Residues 320–337 are compositionally biased toward low complexity; the sequence is AAADPASPAPASTEPPAL. Position 479 is an asymmetric dimethylarginine (R479). Positions 507 to 529 are disordered; sequence PPPVESSPEQPVNNSPETHTVEE. Residues 512 to 524 show a composition bias toward low complexity; it reads SSPEQPVNNSPET. Phosphoserine is present on residues S548, S550, S558, S560, and S565.

Component of the PNUTS-PP1 phosphatase complex, composed of PPP1R10/PNUTS, TOX4, WDR82 and PPP1CA or PPP1CB or PPP1CC. Interacts with PPP1R10/PNUTS. Interacts with FOXO1 and CREB1 (increased by cAMP); FOXO1 and CREB1 are required for full induction of TOX4-dependent activity and the interactions are inhibited by insulin.

Its subcellular location is the nucleus. The protein resides in the chromosome. With respect to regulation, in liver, recruited to target gene promoters following treatment with dexamethasone and cAMP. Binding is decreased in presence of insulin. In terms of biological role, transcription factor that modulates cell fate reprogramming from the somatic state to the pluripotent and neuronal fate. In liver, controls the expression of hormone-regulated gluconeogenic genes such as G6PC1 and PCK1. This regulation is independent of the insulin receptor activation. Also acts as a regulatory component of protein phosphatase 1 (PP1) complexes. Component of the PNUTS-PP1 protein phosphatase complex, a PP1 complex that regulates RNA polymerase II transcription pause-release. PNUTS-PP1 also plays a role in the control of chromatin structure and cell cycle progression during the transition from mitosis into interphase. The polypeptide is TOX high mobility group box family member 4 (TOX4) (Bos taurus (Bovine)).